Here is a 51-residue protein sequence, read N- to C-terminus: Bacteriocin aureocin A53 (51 aa).

N-formylmethionine is present on methionine 1.

The protein localises to the secreted. Antibacterial peptide active against a broad range of lactic acid bacteria, L.monocytogenes and many epidemiologically unrelated strains of S.aureus involved in bovine mastitis. This chain is Bacteriocin aureocin A53 (aucA), found in Staphylococcus aureus.